The following is a 598-amino-acid chain: Aspartate--tRNA(Asp/Asn) ligase (598 aa).

Glu173 provides a ligand contact to L-aspartate. Positions 197–200 (QLFK) are aspartate. Position 219 (Arg219) interacts with L-aspartate. ATP is bound by residues 219–221 (RDE) and Gln228. Residue His448 coordinates L-aspartate. Glu482 is a binding site for ATP. Residue Arg489 coordinates L-aspartate. Residue 534 to 537 (GWDR) coordinates ATP. Residues 560–598 (GYDPLTAAPAPITAQQRKEAGVDAKPETKKAAAGEPAGA) are disordered. Residues 575 to 591 (QRKEAGVDAKPETKKAA) are compositionally biased toward basic and acidic residues.

This sequence belongs to the class-II aminoacyl-tRNA synthetase family. Type 1 subfamily. In terms of assembly, homodimer.

It localises to the cytoplasm. The enzyme catalyses tRNA(Asx) + L-aspartate + ATP = L-aspartyl-tRNA(Asx) + AMP + diphosphate. In terms of biological role, aspartyl-tRNA synthetase with relaxed tRNA specificity since it is able to aspartylate not only its cognate tRNA(Asp) but also tRNA(Asn). Reaction proceeds in two steps: L-aspartate is first activated by ATP to form Asp-AMP and then transferred to the acceptor end of tRNA(Asp/Asn). The protein is Aspartate--tRNA(Asp/Asn) ligase of Kineococcus radiotolerans (strain ATCC BAA-149 / DSM 14245 / SRS30216).